The sequence spans 373 residues: Lipoyl amidotransferase LIPT1, mitochondrial (373 aa).

A mitochondrion-targeting transit peptide spans 1–25; the sequence is MLIPLSMKNCFRLLCQHKVPAAGFK. A BPL/LPL catalytic domain is found at 57-243; the sequence is LEGKPILFLW…EYAAHHQVDG (187 aa). Y107, K151, K161, and T179 together coordinate (R)-lipoyl-5'-AMP.

This sequence belongs to the LplA family.

Its subcellular location is the mitochondrion. The enzyme catalyses (R)-lipoyl-5'-AMP + L-lysyl-[lipoyl-carrier protein] = N(6)-[(R)-lipoyl]-L-lysyl-[lipoyl-carrier protein] + AMP + 2 H(+). The catalysed reaction is N(6)-[(R)-lipoyl]-L-lysyl-[glycine-cleavage complex H protein] + L-lysyl-[lipoyl-carrier protein] = L-lysyl-[glycine-cleavage complex H protein] + N(6)-[(R)-lipoyl]-L-lysyl-[lipoyl-carrier protein]. It participates in protein modification; protein lipoylation via exogenous pathway; protein N(6)-(lipoyl)lysine from lipoate: step 2/2. In terms of biological role, lipoyl amidotransferase that catalyzes the transfer of lipoyl moieties from lipoyl-protein H of the glycine cleavage system (lipoyl-GCSH) to E2 subunits of the pyruvate dehydrogenase complex (PDCE2). Unable to catalyze the transfer of octanoyl from octanoyl-GCSH to PDCE2. In vitro, it is also able to catalyze the transfer of the lipoyl group from lipoyl-AMP to the specific lysine residue of lipoyl domains of lipoate-dependent enzymes but this reaction may not be physiologically relevant. The sequence is that of Lipoyl amidotransferase LIPT1, mitochondrial from Mus musculus (Mouse).